A 374-amino-acid chain; its full sequence is Histidinol-phosphate aminotransferase (374 aa).

N6-(pyridoxal phosphate)lysine is present on Lys-215.

Belongs to the class-II pyridoxal-phosphate-dependent aminotransferase family. Histidinol-phosphate aminotransferase subfamily. As to quaternary structure, homodimer. Requires pyridoxal 5'-phosphate as cofactor.

The enzyme catalyses L-histidinol phosphate + 2-oxoglutarate = 3-(imidazol-4-yl)-2-oxopropyl phosphate + L-glutamate. The protein operates within amino-acid biosynthesis; L-histidine biosynthesis; L-histidine from 5-phospho-alpha-D-ribose 1-diphosphate: step 7/9. The sequence is that of Histidinol-phosphate aminotransferase from Yersinia enterocolitica serotype O:8 / biotype 1B (strain NCTC 13174 / 8081).